Consider the following 597-residue polypeptide: Electron transfer flavoprotein-ubiquinone oxidoreductase, mitochondrial (597 aa).

FAD is bound at residue 53–67 (VVIVGGGPSGLSAAI). Residues 91-112 (IGGHTLSGAVIETRALDELIPN) lie within the membrane without spanning it. Residues Gly285 and Gly286 each coordinate a ubiquinone. An intramembrane segment occupies 409–426 (IDPATYDKNIRDTYVVKE). Residues Cys540, Cys566, Cys569, and Cys572 each coordinate [4Fe-4S] cluster. Residues 557 to 586 (KRLQINAQNCIHCKTCDIKDPQQNINWVTP) form the 4Fe-4S ferredoxin-type domain.

It belongs to the ETF-QO/FixC family. As to quaternary structure, monomer. Requires [4Fe-4S] cluster as cofactor. The cofactor is FAD.

The protein resides in the mitochondrion inner membrane. It carries out the reaction a ubiquinone + reduced [electron-transfer flavoprotein] = a ubiquinol + oxidized [electron-transfer flavoprotein] + H(+). In terms of biological role, accepts electrons from ETF and reduces ubiquinone. This Caenorhabditis elegans protein is Electron transfer flavoprotein-ubiquinone oxidoreductase, mitochondrial (let-721).